The following is a 291-amino-acid chain: MTENRSKLNKELAQMLKGGVIMDVTSPEQAKIAEDAGACAVMALERIPADIRAAGGVSRMSDPKMIKGIQNAVSIPVMAKVRIGHFVEAQILEAIEIDYIDESEVLSPADDLNHIDKNKFNVPFVCGARDLGEALRRVAEGATMIRTKGEAGTGDIVQAVRHMRTMNSEIRRVVSLRQDELYVAAKDMQVPISLLQFVHDNGKLPVVNFAAGGVATPADAALMMQLGAEGVFVGSGIFKSGNPAKRAAAVVKAVTNYNNPSMLAELSEDLGEAMVGINADEISILMAERGK.

D23 provides a ligand contact to D-ribose 5-phosphate. K80 serves as the catalytic Schiff-base intermediate with D-ribose 5-phosphate. D-ribose 5-phosphate is bound at residue G152. Residue R164 participates in D-glyceraldehyde 3-phosphate binding. Residues G213 and 234-235 (GS) contribute to the D-ribose 5-phosphate site.

The protein belongs to the PdxS/SNZ family. As to quaternary structure, in the presence of PdxT, forms a dodecamer of heterodimers.

The enzyme catalyses aldehydo-D-ribose 5-phosphate + D-glyceraldehyde 3-phosphate + L-glutamine = pyridoxal 5'-phosphate + L-glutamate + phosphate + 3 H2O + H(+). It functions in the pathway cofactor biosynthesis; pyridoxal 5'-phosphate biosynthesis. Its function is as follows. Catalyzes the formation of pyridoxal 5'-phosphate from ribose 5-phosphate (RBP), glyceraldehyde 3-phosphate (G3P) and ammonia. The ammonia is provided by the PdxT subunit. Can also use ribulose 5-phosphate and dihydroxyacetone phosphate as substrates, resulting from enzyme-catalyzed isomerization of RBP and G3P, respectively. This chain is Pyridoxal 5'-phosphate synthase subunit PdxS, found in Methanocorpusculum labreanum (strain ATCC 43576 / DSM 4855 / Z).